The sequence spans 286 residues: uncharacterized protein (286 aa).

The segment at 152–182 is disordered; it reads YPSTTTSVTPGKKGEKTTKVDGFSSPLNQDT. Residues 198-218 traverse the membrane as a helical segment; sequence VLIAVTLFVSGIAITVFVIFE. Residues 239-278 are disordered; sequence RRPRKEDQQPGTAESQSDTQPKKVGQEAPNSSSPKKAVEI. Residues 247-257 show a composition bias toward polar residues; sequence QPGTAESQSDT.

The protein resides in the membrane. This is an uncharacterized protein from Bos taurus (Bovine).